Here is a 377-residue protein sequence, read N- to C-terminus: Flagellin C (377 aa).

2 coiled-coil regions span residues 103 to 129 (SNSK…IAET) and 301 to 340 (VDSH…KDTD).

The protein belongs to the bacterial flagellin family. As to quaternary structure, heteromer of multiple flagellin subunits including FlaA, FlaB, FlaC, FlaD and possibly FlaE.

It localises to the secreted. Its subcellular location is the bacterial flagellum. Its function is as follows. Flagellin is the subunit protein which polymerizes to form the filaments of bacterial flagella. FlaC is not essential for flagellar synthesis and motility. The protein is Flagellin C (flaC) of Vibrio anguillarum (Listonella anguillarum).